Reading from the N-terminus, the 338-residue chain is MADKKIRIGINGFGRIGRLVARVVLQRDDVELVAVNDPFITTEYMTYMFKYDSVHGQWKHHELKVKDDKTLLFGEKPVTVFGIRNPEDIPWGEAGADFVVESTGVFTDKDKAAAHLKGGAKKVVISAPSKDAPMFVVGVNEHEYKSDLDIVSNASCTTNCLAPLAKVINDRFGIVEGLMTTVHSITATQKTVDGPSMKDWRGGRAASFNIIPSSTGAAKAVGKVLPSLNGKLTGMSFRVPTVDVSVVDLTVRLEKAATYDEIKKAIKEESEGKMKGILGYTEDDVVSTDFVGDNRSSIFDAKAGIALSDKFVKLVSWYDNEWGYSSRVVDLIVHMSKA.

Residues 15–16, Asp37, and Arg84 each bind NAD(+); that span reads RI. Residue 155–157 participates in D-glyceraldehyde 3-phosphate binding; that stretch reads SCT. The active-site Nucleophile is Cys156. Residue Cys156 is modified to S-glutathionyl cysteine; transient; alternate. Cys156 is modified (S-nitrosocysteine; transient; alternate). Cys160 carries the post-translational modification S-nitrosocysteine; transient. D-glyceraldehyde 3-phosphate contacts are provided by residues Thr186, 215-216, and Arg238; that span reads TG. Position 320 (Asn320) interacts with NAD(+).

Belongs to the glyceraldehyde-3-phosphate dehydrogenase family. As to quaternary structure, homotetramer. Interacts with PLDDELTA. Binds to DPB3-1/NF-YC10 in response to heat-stress; this interaction promotes DPB3-1/NF-YC10 DNA-binding ability to its target promoter. In terms of processing, S-glutathionylation at Cys-156 in the presence of oxidized glutathione (GSSG). S-nitrosylation at Cys-156 and Cys-160 in the presence of S-nitrosoglutathione (GSNO) or sodium nitroprusside (SNP). These reactions may be both a protective mechanism against irreversible oxidation and a mean to store inhibited enzyme in a recoverable form.

Its subcellular location is the cytoplasm. The protein localises to the nucleus. It catalyses the reaction D-glyceraldehyde 3-phosphate + phosphate + NAD(+) = (2R)-3-phospho-glyceroyl phosphate + NADH + H(+). It functions in the pathway carbohydrate degradation; glycolysis; pyruvate from D-glyceraldehyde 3-phosphate: step 1/5. With respect to regulation, inhibition by oxidized glutathione (GSSG), S-nitrosoglutathione (GSNO) and hydrogen peroxide. In terms of biological role, key enzyme in glycolysis that catalyzes the first step of the pathway by converting D-glyceraldehyde 3-phosphate (G3P) into 3-phospho-D-glyceroyl phosphate. Essential for the maintenance of cellular ATP levels and carbohydrate metabolism. Binds DNA in vitro. Together with DNA polymerase II subunit B3-1 (DPB3-1) and GAPC1, enhances heat tolerance and promotes the expression of heat-inducible genes. The protein is Glyceraldehyde-3-phosphate dehydrogenase GAPC2, cytosolic of Arabidopsis thaliana (Mouse-ear cress).